The primary structure comprises 320 residues: Cytochrome f (320 aa).

The signal sequence occupies residues 1–35 (MENKNTFSWVKEQMTRSISVSIMIYVITQTSISNA). The heme site is built by tyrosine 36, cysteine 56, cysteine 59, and histidine 60. The chain crosses the membrane as a helical span at residues 286–306 (VQGLLFFFASVILAQVFLVLK).

It belongs to the cytochrome f family. As to quaternary structure, the 4 large subunits of the cytochrome b6-f complex are cytochrome b6, subunit IV (17 kDa polypeptide, petD), cytochrome f and the Rieske protein, while the 4 small subunits are PetG, PetL, PetM and PetN. The complex functions as a dimer. It depends on heme as a cofactor.

Its subcellular location is the plastid. It is found in the chloroplast thylakoid membrane. Its function is as follows. Component of the cytochrome b6-f complex, which mediates electron transfer between photosystem II (PSII) and photosystem I (PSI), cyclic electron flow around PSI, and state transitions. This chain is Cytochrome f, found in Lolium perenne (Perennial ryegrass).